The following is a 253-amino-acid chain: 7-carboxy-7-deazaguanine synthase (253 aa).

Substrate is bound by residues 12 to 14 (WQG) and arginine 32. Residues 23–253 (AFGRRQIFVR…FQVHKYLNVL (231 aa)) enclose the Radical SAM core domain. Cysteine 36, cysteine 40, and cysteine 43 together coordinate [4Fe-4S] cluster. Serine 45 contacts Mg(2+). Substrate is bound at residue threonine 98. Glycine 100 provides a ligand contact to S-adenosyl-L-methionine.

This sequence belongs to the radical SAM superfamily. 7-carboxy-7-deazaguanine synthase family. In terms of assembly, homodimer. It depends on [4Fe-4S] cluster as a cofactor. Requires S-adenosyl-L-methionine as cofactor. Mg(2+) serves as cofactor.

It catalyses the reaction 6-carboxy-5,6,7,8-tetrahydropterin + H(+) = 7-carboxy-7-deazaguanine + NH4(+). The protein operates within purine metabolism; 7-cyano-7-deazaguanine biosynthesis. Functionally, catalyzes the complex heterocyclic radical-mediated conversion of 6-carboxy-5,6,7,8-tetrahydropterin (CPH4) to 7-carboxy-7-deazaguanine (CDG), a step common to the biosynthetic pathways of all 7-deazapurine-containing compounds. The polypeptide is 7-carboxy-7-deazaguanine synthase (Thermococcus kodakarensis (strain ATCC BAA-918 / JCM 12380 / KOD1) (Pyrococcus kodakaraensis (strain KOD1))).